The chain runs to 286 residues: UPF0761 membrane protein KPK_5501 (286 aa).

7 consecutive transmembrane segments (helical) span residues 44-64 (LLSL…FPMF), 74-94 (FIFA…IEQF), 104-124 (VGAF…DSAL), 140-160 (FAVY…SLAI), 183-203 (LFPL…VPTT), 210-230 (AVIG…AFAL), and 244-264 (VISV…IVLL).

Belongs to the UPF0761 family.

The protein localises to the cell inner membrane. The polypeptide is UPF0761 membrane protein KPK_5501 (Klebsiella pneumoniae (strain 342)).